The primary structure comprises 699 residues: Endoplasmic reticulum mannosyl-oligosaccharide 1,2-alpha-mannosidase (699 aa).

Topologically, residues 1–84 (MAACEGRRSG…WKQLSRLQRN (84 aa)) are cytoplasmic. The helical; Signal-anchor for type II membrane protein transmembrane segment at 85 to 105 (MILFLLAFLLFCGLLFYINLA) threads the bilayer. Residues 106 to 699 (DHWKALAFRL…AHPLPIWTPA (594 aa)) are Lumenal-facing. The tract at residues 125 to 243 (IAGLKPANPP…LPPARTQGTP (119 aa)) is disordered. Basic and acidic residues predominate over residues 176-201 (DLKDGTQEEATKRQEAPVDPRPEGDP). Glu-330 serves as the catalytic Proton donor. The active site involves Asp-463. Cysteines 527 and 556 form a disulfide. Catalysis depends on Glu-570, which acts as the Proton donor. Residue Glu-599 is part of the active site. Residue Thr-688 coordinates Ca(2+).

It belongs to the glycosyl hydrolase 47 family. Ca(2+) is required as a cofactor. Widely expressed.

Its subcellular location is the endoplasmic reticulum membrane. It catalyses the reaction N(4)-(alpha-D-Man-(1-&gt;2)-alpha-D-Man-(1-&gt;2)-alpha-D-Man-(1-&gt;3)-[alpha-D-Man-(1-&gt;2)-alpha-D-Man-(1-&gt;3)-[alpha-D-Man-(1-&gt;2)-alpha-D-Man-(1-&gt;6)]-alpha-D-Man-(1-&gt;6)]-beta-D-Man-(1-&gt;4)-beta-D-GlcNAc-(1-&gt;4)-beta-D-GlcNAc)-L-asparaginyl-[protein] (N-glucan mannose isomer 9A1,2,3B1,2,3) + 4 H2O = N(4)-(alpha-D-Man-(1-&gt;3)-[alpha-D-Man-(1-&gt;3)-[alpha-D-Man-(1-&gt;6)]-alpha-D-Man-(1-&gt;6)]-beta-D-Man-(1-&gt;4)-beta-D-GlcNAc-(1-&gt;4)-beta-D-GlcNAc)-L-asparaginyl-[protein] (N-glucan mannose isomer 5A1,2) + 4 beta-D-mannose. It carries out the reaction N(4)-(alpha-D-Man-(1-&gt;2)-alpha-D-Man-(1-&gt;2)-alpha-D-Man-(1-&gt;3)-[alpha-D-Man-(1-&gt;3)-[alpha-D-Man-(1-&gt;2)-alpha-D-Man-(1-&gt;6)]-alpha-D-Man-(1-&gt;6)]-beta-D-Man-(1-&gt;4)-beta-D-GlcNAc-(1-&gt;4)-beta-D-GlcNAc)-L-asparaginyl-[protein] (N-glucan mannose isomer 8A1,2,3B1,3) + 3 H2O = N(4)-(alpha-D-Man-(1-&gt;3)-[alpha-D-Man-(1-&gt;3)-[alpha-D-Man-(1-&gt;6)]-alpha-D-Man-(1-&gt;6)]-beta-D-Man-(1-&gt;4)-beta-D-GlcNAc-(1-&gt;4)-beta-D-GlcNAc)-L-asparaginyl-[protein] (N-glucan mannose isomer 5A1,2) + 3 beta-D-mannose. The protein operates within protein modification; protein glycosylation. Inhibited by both 1-deoxymannojirimycin (dMNJ) and kifunensine. Functionally, involved in glycoprotein quality control targeting of misfolded glycoproteins for degradation. It primarily trims a single alpha-1,2-linked mannose residue from Man(9)GlcNAc(2) to produce Man(8)GlcNAc(2), but at high enzyme concentrations, as found in the ER quality control compartment (ERQC), it further trims the carbohydrates to Man(5-6)GlcNAc(2). This is Endoplasmic reticulum mannosyl-oligosaccharide 1,2-alpha-mannosidase (MAN1B1) from Homo sapiens (Human).